The chain runs to 96 residues: Co-chaperonin GroES (96 aa).

The protein belongs to the GroES chaperonin family. Heptamer of 7 subunits arranged in a ring. Interacts with the chaperonin GroEL.

The protein resides in the cytoplasm. Functionally, together with the chaperonin GroEL, plays an essential role in assisting protein folding. The GroEL-GroES system forms a nano-cage that allows encapsulation of the non-native substrate proteins and provides a physical environment optimized to promote and accelerate protein folding. GroES binds to the apical surface of the GroEL ring, thereby capping the opening of the GroEL channel. This Buchnera aphidicola subsp. Myzus persicae (Myzus persicae primary endosymbiont) protein is Co-chaperonin GroES.